The primary structure comprises 93 residues: M-zodatoxin-Lt5a (93 aa).

An N-terminal signal peptide occupies residues 1–22 (MKYCVVILALLVALVCITESRS). The propeptide occupies 23 to 64 (TETGYAVAETLEDNDLDELQAYLEEIAEASEMEDFSNIEEAR). The Processing quadruplet motif signature appears at 61-64 (EEAR). Leucine 92 carries the leucine amide modification.

Post-translationally, cleavage of the propeptide depends on the processing quadruplet motif (XXXR, with at least one of X being E). In terms of tissue distribution, expressed by the venom gland.

The protein localises to the secreted. In terms of biological role, has antimicrobial activity against. Gram-positive bacteria (A.globiformis VKM Ac-1112 (MIC=1.1 uM), and B.subtilis VKM B-501 (MIC=0.6 uM)), Gram-negative bacteria (E.coli DH5-alpha (MIC=0.6 uM), E.coli MH1 (MIC=0.6 uM), and P.aeruginosa PAO1 (MIC=18 uM)), and yeasts (P.pastoris GS115 (MIC&gt;37 uM), and S.cerevisiae Y190 (MIC&gt;37 uM)). Also has a moderate hemolytic activity against rabbit erythrocytes. Causes paralysis, but is not lethal when injected into insect (M.domestica) larvae. This is M-zodatoxin-Lt5a from Lachesana tarabaevi (Spider).